The chain runs to 578 residues: PTS system fructose-specific EIIB'BC component (578 aa).

PTS EIIB type-2 domains follow at residues 1-99 (MSKI…EALA) and 119-214 (VVAI…AALA). Cys125 serves as the catalytic Phosphocysteine intermediate; for EIIB activity. Cys125 bears the Phosphocysteine; by EIIA mark. One can recognise a PTS EIIC type-2 domain in the interval 241-576 (PYMHLLTGVS…KKPIPAEERA (336 aa)). 9 helical membrane-spanning segments follow: residues 251 to 271 (YMLPLVVAGGLLIALSFVFGI), 284 to 304 (LMAIGGGAAFKLMVPVLAGFI), 319 to 339 (IGGMLAVNLNAGFLGGIVAGF), 364 to 384 (VLILPLLSTAITGLIMVYVVG), 405 to 425 (NAVVLGLILGGMMAVDMGGPI), 428 to 450 (AAYTFAVGLLTSSTYAPMAAVMA), 477 to 497 (AGGAAAVLGLSFITEGAIPFA), 518 to 538 (LSMALGCLLVAPHGGIFVLAI), and 545 to 565 (LGLYALSIVVGTLVTTGLLIA).

The protein resides in the cell inner membrane. It catalyses the reaction D-fructose(out) + N(pros)-phospho-L-histidyl-[protein] = D-fructose 1-phosphate(in) + L-histidyl-[protein]. Functionally, the phosphoenolpyruvate-dependent sugar phosphotransferase system (sugar PTS), a major carbohydrate active transport system, catalyzes the phosphorylation of incoming sugar substrates concomitantly with their translocation across the cell membrane. The enzyme II FruAB PTS system is involved in fructose transport. This Rhodobacter capsulatus (Rhodopseudomonas capsulata) protein is PTS system fructose-specific EIIB'BC component.